A 478-amino-acid polypeptide reads, in one-letter code: Adenosylhomocysteinase (478 aa).

Substrate-binding residues include threonine 56, aspartate 139, and glutamate 201. 202–204 (TTT) contacts NAD(+). 2 residues coordinate substrate: lysine 231 and aspartate 235. NAD(+) contacts are provided by residues asparagine 236, 265 to 270 (GYGDVG), glutamate 288, asparagine 323, 344 to 346 (IGH), and asparagine 392.

This sequence belongs to the adenosylhomocysteinase family. NAD(+) serves as cofactor.

The protein resides in the cytoplasm. The catalysed reaction is S-adenosyl-L-homocysteine + H2O = L-homocysteine + adenosine. It functions in the pathway amino-acid biosynthesis; L-homocysteine biosynthesis; L-homocysteine from S-adenosyl-L-homocysteine: step 1/1. May play a key role in the regulation of the intracellular concentration of adenosylhomocysteine. The polypeptide is Adenosylhomocysteinase (Corynebacterium diphtheriae (strain ATCC 700971 / NCTC 13129 / Biotype gravis)).